Reading from the N-terminus, the 466-residue chain is Asparagine--tRNA ligase (466 aa).

It belongs to the class-II aminoacyl-tRNA synthetase family. As to quaternary structure, homodimer.

Its subcellular location is the cytoplasm. It catalyses the reaction tRNA(Asn) + L-asparagine + ATP = L-asparaginyl-tRNA(Asn) + AMP + diphosphate + H(+). This chain is Asparagine--tRNA ligase, found in Sodalis glossinidius (strain morsitans).